Here is a 73-residue protein sequence, read N- to C-terminus: Putative antitoxin VapB18 (73 aa).

Belongs to the UPF0330 family.

Functionally, possibly the antitoxin component of a type II toxin-antitoxin (TA) system. Its cognate toxin is VapC18 (Potential). The chain is Putative antitoxin VapB18 (vapB18) from Archaeoglobus fulgidus (strain ATCC 49558 / DSM 4304 / JCM 9628 / NBRC 100126 / VC-16).